Consider the following 259-residue polypeptide: Global transcriptional regulator CodY (259 aa).

The segment at 1 to 155 is GAF domain; the sequence is MNLLQKTRKI…GATVVGMEIL (155 aa). A DNA-binding region (H-T-H motif) is located at residues 203 to 222; the sequence is ASKIADRVGITRSVIVNALR. Ser215 carries the post-translational modification Phosphoserine.

Belongs to the CodY family.

The protein resides in the cytoplasm. Functionally, DNA-binding global transcriptional regulator which is involved in the adaptive response to starvation and acts by directly or indirectly controlling the expression of numerous genes in response to nutrient availability. During rapid exponential growth, CodY is highly active and represses genes whose products allow adaptation to nutrient depletion. This chain is Global transcriptional regulator CodY, found in Geobacillus sp. (strain WCH70).